The chain runs to 207 residues: Glutathione S-transferase P (207 aa).

Positions 1–78 (PPYTITYFPV…HLGRSFGLYG (78 aa)) constitute a GST N-terminal domain. Tyrosine 3 is modified (phosphotyrosine; by EGFR). Residues tyrosine 7, arginine 13, tryptophan 38, lysine 42, and 49 to 50 (QL) contribute to the glutathione site. Residue threonine 59 is modified to Phosphothreonine. Residue 62–63 (QS) coordinates glutathione. In terms of domain architecture, GST C-terminal spans 80 to 201 (DQKEAALVDM…ASPEHVNRPI (122 aa)). Residues lysine 100 and lysine 113 each carry the N6-succinyllysine modification. N6-acetyllysine is present on lysine 125.

It belongs to the GST superfamily. Pi family. Homodimer. Interacts with CDK5.

Its subcellular location is the cytoplasm. The protein localises to the mitochondrion. It is found in the nucleus. The catalysed reaction is RX + glutathione = an S-substituted glutathione + a halide anion + H(+). It carries out the reaction prostaglandin J2 + glutathione = prostaglandin J2-S-(R)-glutathione. It catalyses the reaction prostaglandin J2 + glutathione = prostaglandin J2-S-(S)-glutathione. The enzyme catalyses prostaglandin A2 + glutathione = prostaglandin A2-S-(S)-glutathione. The catalysed reaction is 11(S)-hydroxy-14(S),15(S)-epoxy-(5Z,8Z,12E)-eicosatrienoate + glutathione = (11S,15S)-dihydroxy-14(R)-S-glutathionyl-(5Z,8Z,12E)-eicosatrienoate. Its function is as follows. Conjugation of reduced glutathione to a wide number of exogenous and endogenous hydrophobic electrophiles. Involved in the formation of glutathione conjugates of both prostaglandin A2 (PGA2) and prostaglandin J2 (PGJ2). Participates in the formation of novel hepoxilin regioisomers. Negatively regulates CDK5 activity via p25/p35 translocation to prevent neurodegeneration. The sequence is that of Glutathione S-transferase P (GSTP1) from Sus scrofa (Pig).